Here is a 579-residue protein sequence, read N- to C-terminus: ATP-dependent lipid A-core flippase (579 aa).

A run of 4 helical transmembrane segments spans residues 24–44 (FLAA…LAEM), 61–81 (LMLP…TFLG), 147–167 (LFVI…TLIF), and 253–273 (LLVA…ALMA). The ABC transmembrane type-1 domain maps to 25–306 (LAAVVGYAIY…LTEVNSTIQK (282 aa)). The region spanning 338 to 573 (VRFEGVRFRY…DGAYAALHQL (236 aa)) is the ABC transporter domain. 372–379 (GRSGSGKS) serves as a coordination point for ATP.

It belongs to the ABC transporter superfamily. Lipid exporter (TC 3.A.1.106) family. Homodimer.

The protein resides in the cell inner membrane. It carries out the reaction ATP + H2O + lipid A-core oligosaccharideSide 1 = ADP + phosphate + lipid A-core oligosaccharideSide 2.. Involved in lipopolysaccharide (LPS) biosynthesis. Translocates lipid A-core from the inner to the outer leaflet of the inner membrane. Transmembrane domains (TMD) form a pore in the inner membrane and the ATP-binding domain (NBD) is responsible for energy generation. In Chromohalobacter salexigens (strain ATCC BAA-138 / DSM 3043 / CIP 106854 / NCIMB 13768 / 1H11), this protein is ATP-dependent lipid A-core flippase.